We begin with the raw amino-acid sequence, 91 residues long: MGRSLKKGPFADHHLLAKVDKLNESGEKQVIKTWSRRSTIFPEFMGHTFGVHDGRKHVPVFVTEDMVGHKLGEFAPTRTYKGHGSDKKTKR.

It belongs to the universal ribosomal protein uS19 family.

Protein S19 forms a complex with S13 that binds strongly to the 16S ribosomal RNA. The sequence is that of Small ribosomal subunit protein uS19 from Exiguobacterium sp. (strain ATCC BAA-1283 / AT1b).